A 445-amino-acid chain; its full sequence is UPF0210 protein SMU_73 (445 aa).

The protein belongs to the UPF0210 family. In terms of assembly, homodimer.

In Streptococcus mutans serotype c (strain ATCC 700610 / UA159), this protein is UPF0210 protein SMU_73.